The following is an 83-amino-acid chain: MENDAGENVDLYVPRKCSASNRIIHAKDHASVQLTIVDVDPETGRQTDGSKTYAICGEIRRMGESDDCIVRLAKKDGIITKNF.

This sequence belongs to the eukaryotic ribosomal protein eS21 family. Component of the 40S small ribosomal subunit. Interacts with sta.

It is found in the cytoplasm. The protein resides in the cytosol. It localises to the rough endoplasmic reticulum. Its function is as follows. May be an associated component of the ribosome rather than a core structural subunit. May act as a translation initiation factor. Has a role in regulation of cell proliferation in the hematopoietic organs and the imaginal disks of larva. This is Small ribosomal subunit protein eS21 (RpS21) from Drosophila simulans (Fruit fly).